The primary structure comprises 198 residues: Nucleoid occlusion factor SlmA (198 aa).

An HTH tetR-type domain is found at 9-70 (RNRREEILQA…SLIEFIEDSL (62 aa)). A DNA-binding region (H-T-H motif) is located at residues 33-52 (TTAKLAANVGVSEAALYRHF). Positions 117 to 144 (EQDRLQGRINQLFERIEAQLRQVLKERK) form a coiled coil.

It belongs to the nucleoid occlusion factor SlmA family. Homodimer. Interacts with FtsZ.

It is found in the cytoplasm. Its subcellular location is the nucleoid. Its function is as follows. Required for nucleoid occlusion (NO) phenomenon, which prevents Z-ring formation and cell division over the nucleoid. Acts as a DNA-associated cell division inhibitor that binds simultaneously chromosomal DNA and FtsZ, and disrupts the assembly of FtsZ polymers. SlmA-DNA-binding sequences (SBS) are dispersed on non-Ter regions of the chromosome, preventing FtsZ polymerization at these regions. This is Nucleoid occlusion factor SlmA from Serratia proteamaculans (strain 568).